We begin with the raw amino-acid sequence, 139 residues long: Large ribosomal subunit protein uL22 (139 aa).

The disordered stretch occupies residues 1–21 (MTAPTPEFRNKKQRKQQVKLR).

The protein belongs to the universal ribosomal protein uL22 family. In terms of assembly, part of the 50S ribosomal subunit.

In terms of biological role, this protein binds specifically to 23S rRNA; its binding is stimulated by other ribosomal proteins, e.g. L4, L17, and L20. It is important during the early stages of 50S assembly. It makes multiple contacts with different domains of the 23S rRNA in the assembled 50S subunit and ribosome. Functionally, the globular domain of the protein is located near the polypeptide exit tunnel on the outside of the subunit, while an extended beta-hairpin is found that lines the wall of the exit tunnel in the center of the 70S ribosome. This Deinococcus deserti (strain DSM 17065 / CIP 109153 / LMG 22923 / VCD115) protein is Large ribosomal subunit protein uL22.